The following is a 418-amino-acid chain: Serine protease inhibitor A3M (418 aa).

Residues 1–20 (MAFIAALGILMAGICPTVLC) form the signal peptide. Residues N104, N184, and N269 are each glycosylated (N-linked (GlcNAc...) asparagine). An RCL region spans residues 367–392 (GTEAAAATGFIFGFRSRRLQTMTVQF).

Belongs to the serpin family. As to expression, expressed in liver and testis.

It localises to the secreted. This chain is Serine protease inhibitor A3M (Serpina3m), found in Mus musculus (Mouse).